Reading from the N-terminus, the 219-residue chain is Ras-related protein RABA5d (219 aa).

Serine 2 is subject to N-acetylserine. 19-26 (GDSAVGKS) contacts GTP. Positions 41–49 (SKATIGVEF) match the Effector region motif. Residues 67–71 (DTAGQ), 125–128 (NKCD), and 155–156 (SA) contribute to the GTP site. 2 S-geranylgeranyl cysteine lipidation sites follow: cysteine 215 and cysteine 216.

The protein belongs to the small GTPase superfamily. Rab family.

The protein localises to the cell membrane. Its function is as follows. Intracellular vesicle trafficking and protein transport. This is Ras-related protein RABA5d (RABA5D) from Arabidopsis thaliana (Mouse-ear cress).